We begin with the raw amino-acid sequence, 765 residues long: ATP-dependent RNA helicase DBP4 (765 aa).

Residues 48–76 (SQFSDLPITENTLKGLKEATFVSLTDIQK) carry the Q motif motif. One can recognise a Helicase ATP-binding domain in the interval 79–253 (IPIALKGEDL…RLSLTNPNKI (175 aa)). 92 to 99 (ARTGSGKT) contributes to the ATP binding site. Residues 201–204 (DEAD) carry the DEAD box motif. The region spanning 267–439 (SLEQYYVKVP…SIRPQLQSLC (173 aa)) is the Helicase C-terminal domain. 2 stretches are compositionally biased toward basic and acidic residues: residues 655–668 (KISDITDKEVERQK) and 720–738 (PVSKKPKWFEGGDDDKSKN). Residues 655–765 (KISDITDKEV…ESLTARLIGN (111 aa)) form a disordered region. The span at 744–756 (VEYDEPETLEDLE) shows a compositional bias: acidic residues.

Belongs to the DEAD box helicase family. DDX10/DBP4 subfamily. Interacts with the U3 and U14 snoRNAs. Associates with pre-ribosomal complexes.

The protein localises to the nucleus. It localises to the nucleolus. The enzyme catalyses ATP + H2O = ADP + phosphate + H(+). In terms of biological role, ATP-dependent RNA helicase required for ribosome biogenesis. Involved in the release of U14 snoRNA in pre-ribosomal complexes. Required for pre-rRNA cleavage at site A2. The protein is ATP-dependent RNA helicase DBP4 (DBP4) of Candida albicans (strain SC5314 / ATCC MYA-2876) (Yeast).